Here is a 447-residue protein sequence, read N- to C-terminus: N-succinylarginine dihydrolase (447 aa).

Substrate-binding positions include 19-28, asparagine 110, and 137-138; these read AGLSFGNEAS and HR. Residue glutamate 174 is part of the active site. Arginine 212 is a binding site for substrate. Histidine 248 is an active-site residue. Positions 250 and 359 each coordinate substrate. Cysteine 365 serves as the catalytic Nucleophile.

It belongs to the succinylarginine dihydrolase family. Homodimer.

It catalyses the reaction N(2)-succinyl-L-arginine + 2 H2O + 2 H(+) = N(2)-succinyl-L-ornithine + 2 NH4(+) + CO2. Its pathway is amino-acid degradation; L-arginine degradation via AST pathway; L-glutamate and succinate from L-arginine: step 2/5. In terms of biological role, catalyzes the hydrolysis of N(2)-succinylarginine into N(2)-succinylornithine, ammonia and CO(2). The protein is N-succinylarginine dihydrolase of Escherichia coli O6:H1 (strain CFT073 / ATCC 700928 / UPEC).